A 510-amino-acid chain; its full sequence is Kynurenine 3-monooxygenase (510 aa).

It belongs to the aromatic-ring hydroxylase family. KMO subfamily. The cofactor is FAD.

It is found in the mitochondrion outer membrane. It catalyses the reaction L-kynurenine + NADPH + O2 + H(+) = 3-hydroxy-L-kynurenine + NADP(+) + H2O. Its pathway is cofactor biosynthesis; NAD(+) biosynthesis; quinolinate from L-kynurenine: step 1/3. Catalyzes the hydroxylation of L-kynurenine (L-Kyn) to form 3-hydroxy-L-kynurenine (L-3OHKyn). Required for synthesis of quinolinic acid. In Aspergillus oryzae (strain ATCC 42149 / RIB 40) (Yellow koji mold), this protein is Kynurenine 3-monooxygenase (bna4).